Reading from the N-terminus, the 565-residue chain is NAD-dependent malic enzyme (565 aa).

The active-site Proton donor is Tyr104. Residue Arg157 coordinates NAD(+). Catalysis depends on Lys175, which acts as the Proton acceptor. A divalent metal cation is bound by residues Glu246, Asp247, and Asp270. Asp270 and Asn418 together coordinate NAD(+).

This sequence belongs to the malic enzymes family. In terms of assembly, homotetramer. The cofactor is Mg(2+). Requires Mn(2+) as cofactor.

The catalysed reaction is (S)-malate + NAD(+) = pyruvate + CO2 + NADH. It carries out the reaction oxaloacetate + H(+) = pyruvate + CO2. The sequence is that of NAD-dependent malic enzyme from Salmonella agona (strain SL483).